The primary structure comprises 150 residues: MVKLALVVAEFNYDITHLMLQKALEHAKFLGAEVTYVVKVPGVFDIPMVLKELALKEDVDAVVTLGAVIQGATKHDEIVAQQAARKILDLAVESGKPITLGIIGHGANRMQALERVEEYARRAVEAAVKLARRKKLLKEAKYGGSTVVID.

Residues Phe11, 43–45 (VFD), and 67–69 (AVI) contribute to the 5-amino-6-(D-ribitylamino)uracil site. Residue 72–73 (AT) coordinates (2S)-2-hydroxy-3-oxobutyl phosphate. Catalysis depends on His75, which acts as the Proton donor. Leu100 serves as a coordination point for 5-amino-6-(D-ribitylamino)uracil. Arg115 serves as a coordination point for (2S)-2-hydroxy-3-oxobutyl phosphate.

This sequence belongs to the DMRL synthase family.

The catalysed reaction is (2S)-2-hydroxy-3-oxobutyl phosphate + 5-amino-6-(D-ribitylamino)uracil = 6,7-dimethyl-8-(1-D-ribityl)lumazine + phosphate + 2 H2O + H(+). The protein operates within cofactor biosynthesis; riboflavin biosynthesis; riboflavin from 2-hydroxy-3-oxobutyl phosphate and 5-amino-6-(D-ribitylamino)uracil: step 1/2. Catalyzes the formation of 6,7-dimethyl-8-ribityllumazine by condensation of 5-amino-6-(D-ribitylamino)uracil with 3,4-dihydroxy-2-butanone 4-phosphate. This is the penultimate step in the biosynthesis of riboflavin. This Pyrobaculum calidifontis (strain DSM 21063 / JCM 11548 / VA1) protein is 6,7-dimethyl-8-ribityllumazine synthase.